A 225-amino-acid chain; its full sequence is Glutathione S-transferase zeta class (225 aa).

A GST N-terminal domain is found at 10 to 91; the sequence is PKLKLYSYFR…YLEEKYPEHP (82 aa). Residues 20–25, glutamine 49, valine 63, 75–76, glutamine 115, and 119–121 contribute to the glutathione site; these read SSCSFR, DS, and NLA. In terms of domain architecture, GST C-terminal spans 96–221; sequence DIHKKAINYQ…MPDKQPDSTS (126 aa).

Belongs to the GST superfamily. Zeta family.

Its subcellular location is the cytoplasm. The catalysed reaction is RX + glutathione = an S-substituted glutathione + a halide anion + H(+). This is Glutathione S-transferase zeta class from Euphorbia esula (Leafy spurge).